A 726-amino-acid polypeptide reads, in one-letter code: Catalase-peroxidase (726 aa).

An N-terminal signal peptide occupies residues 1 to 16 (MDNPTDSAGKCPVAHG). Residues 1 to 26 (MDNPTDSAGKCPVAHGNTPRSRSNRD) are disordered. The segment at residues 96 to 218 (WHSAGTYRIT…LGAVQMGLIY (123 aa)) is a cross-link (tryptophyl-tyrosyl-methioninium (Trp-Tyr) (with M-244)). Catalysis depends on histidine 97, which acts as the Proton acceptor. A cross-link (tryptophyl-tyrosyl-methioninium (Tyr-Met) (with W-96)) is located at residues 218–244 (YVNPEGPNGTPDPLASARDIRETFARM). Histidine 259 is a binding site for heme b.

Belongs to the peroxidase family. Peroxidase/catalase subfamily. In terms of assembly, homodimer or homotetramer. Heme b serves as cofactor. In terms of processing, formation of the three residue Trp-Tyr-Met cross-link is important for the catalase, but not the peroxidase activity of the enzyme.

It carries out the reaction H2O2 + AH2 = A + 2 H2O. It catalyses the reaction 2 H2O2 = O2 + 2 H2O. Bifunctional enzyme with both catalase and broad-spectrum peroxidase activity. This Rhizobium johnstonii (strain DSM 114642 / LMG 32736 / 3841) (Rhizobium leguminosarum bv. viciae) protein is Catalase-peroxidase.